The chain runs to 81 residues: Costars family protein ABRACL (81 aa).

Methionine 1 is subject to N-acetylmethionine.

This sequence belongs to the costars family.

The chain is Costars family protein ABRACL (ABRACL) from Homo sapiens (Human).